We begin with the raw amino-acid sequence, 522 residues long: Solute carrier family 2, facilitated glucose transporter member 2 (522 aa).

The Cytoplasmic portion of the chain corresponds to 1–10 (MSEDKITGTL). Residues 11–31 (AFTVFTAVLGSFQFGYDIGVI) traverse the membrane as a helical segment. The Extracellular portion of the chain corresponds to 32–96 (NAPQEVIISH…SAHIVTMLWS (65 aa)). N-linked (GlcNAc...) asparagine glycosylation occurs at N62. The helical transmembrane segment at 97–117 (LSVSSFAVGGMVASFFGGWLG) threads the bilayer. Residues 118-125 (DKLGRIKA) lie on the Cytoplasmic side of the membrane. Residues 126–146 (MLAANSLSLTGALLMGCSKFG) form a helical membrane-spanning segment. The Extracellular portion of the chain corresponds to 147–156 (PAHALIIAGR). A helical membrane pass occupies residues 157–177 (SVSGLYCGLISGLVPMYIGEI). Residues 178–185 (APTTLRGA) are Cytoplasmic-facing. The helical transmembrane segment at 186-206 (LGTLHQLALVTGILISQIAGL) threads the bilayer. Position 191 (Q191) interacts with D-glucose. Residues 207 to 215 (SFILGNQDY) are Extracellular-facing. The chain crosses the membrane as a helical span at residues 216-236 (WHILLGLSAVPALLQCLLLLF). Residues 237-301 (CPESPRYLYL…LFTDPNYRQP (65 aa)) lie on the Cytoplasmic side of the membrane. The helical transmembrane segment at 302 to 322 (IVVALMLHLAQQFSGINGIFY) threads the bilayer. D-glucose-binding positions include 312-313 (QQ) and N318. Over 323–337 (YSTSIFQTAGISQPV) the chain is Extracellular. The chain crosses the membrane as a helical span at residues 338–358 (YATIGVGAINMIFTAVSVLLV). Residue N347 participates in D-glucose binding. Topologically, residues 359-365 (EKAGRRT) are cytoplasmic. Residues 366–386 (LFLAGMIGMFFCAVFMSLGLV) traverse the membrane as a helical segment. Topologically, residues 387–401 (LLDKFTWMSYVSMTA) are extracellular. A helical transmembrane segment spans residues 402–422 (IFLFVSFFEIGPGPIPWFMVA). D-glucose-binding residues include E410 and W418. The Cytoplasmic portion of the chain corresponds to 423–431 (EFFSQGPRP). Residues 432-452 (TALALAAFSNWVCNFIIALCF) form a helical membrane-spanning segment. At 453 to 459 (QYIADFL) the chain is on the extracellular side. The helical transmembrane segment at 460–480 (GPYVFFLFAGVVLVFTLFTFF) threads the bilayer. Topologically, residues 481–522 (KVPETKGKSFDEIAAEFRKKSGSAPPRKATVQMEFLGSSETV) are cytoplasmic. Phosphothreonine is present on T521.

Belongs to the major facilitator superfamily. Sugar transporter (TC 2.A.1.1) family. Glucose transporter subfamily. N-glycosylated; required for stability and retention at the cell surface of pancreatic beta cells. Present in liver, intestine, kidney and beta-pancreatic islet cells.

It is found in the cell membrane. The enzyme catalyses D-glucose(out) = D-glucose(in). The catalysed reaction is D-fructose(out) = D-fructose(in). It carries out the reaction L-dehydroascorbate(out) = L-dehydroascorbate(in). It catalyses the reaction D-galactose(in) = D-galactose(out). With respect to regulation, D-glucose and maltose competitively inhibit fructose transport. D-glucose, D-fructose and maltose inhibit deoxyglucose transport. In terms of biological role, facilitative hexose transporter that mediates the transport of glucose, fructose and galactose. Likely mediates the bidirectional transfer of glucose across the plasma membrane of hepatocytes and is responsible for uptake of glucose by the beta cells; may comprise part of the glucose-sensing mechanism of the beta cell. May also participate with the Na(+)/glucose cotransporter in the transcellular transport of glucose in the small intestine and kidney. Also able to mediate the transport of dehydroascorbate. The polypeptide is Solute carrier family 2, facilitated glucose transporter member 2 (Rattus norvegicus (Rat)).